The following is a 180-amino-acid chain: MSILADTEKKMATALEFFQKEIRAFRTGKAHPALVETVTVDVYGTTMRLSDLASISVADTRQLVISPYDANNVSAISKGIIAANLNLQPDAEGAIIRIKIPEPTAEYRNEVIKQLRRKSEEAKVTIRNVRREANDKLKKDSDLTEDAVKGMEKKIQELTDKFCKQIDEMSKQKEADLSSI.

Belongs to the RRF family.

The protein localises to the cytoplasm. Responsible for the release of ribosomes from messenger RNA at the termination of protein biosynthesis. May increase the efficiency of translation by recycling ribosomes from one round of translation to another. This is Ribosome-recycling factor from Chlamydia felis (strain Fe/C-56) (Chlamydophila felis).